The following is a 585-amino-acid chain: Probable inactive serine/threonine-protein kinase slob1 (585 aa).

The FYVE-type zinc-finger motif lies at Asp-21 to Glu-82. Cys-27, Cys-30, Cys-43, Cys-46, Cys-51, Cys-54, Cys-74, and Cys-77 together coordinate Zn(2+). One can recognise a Protein kinase domain in the interval Ser-108 to Asn-478. 2 stretches are compositionally biased toward low complexity: residues Ile-426–Ser-456 and Leu-466–Pro-503. The tract at residues Ile-426–Lys-585 is disordered. The segment covering Thr-513 to Ser-532 has biased composition (pro residues). Residues Ser-533–Ser-542 are compositionally biased toward low complexity. In terms of domain architecture, WH2 spans Ser-542 to Thr-562.

The protein belongs to the protein kinase superfamily. Ser/Thr protein kinase family.

In Dictyostelium discoideum (Social amoeba), this protein is Probable inactive serine/threonine-protein kinase slob1 (slob1).